The following is a 269-amino-acid chain: Diaminopimelate epimerase (269 aa).

Substrate is bound by residues asparagine 13, glutamine 46, and asparagine 65. Cysteine 74 serves as the catalytic Proton donor. Residues 75-76, asparagine 149, asparagine 182, and 200-201 contribute to the substrate site; these read GN and ER. The Proton acceptor role is filled by cysteine 209. 210 to 211 lines the substrate pocket; sequence GT.

It belongs to the diaminopimelate epimerase family. In terms of assembly, homodimer.

The protein resides in the cytoplasm. The catalysed reaction is (2S,6S)-2,6-diaminopimelate = meso-2,6-diaminopimelate. Its pathway is amino-acid biosynthesis; L-lysine biosynthesis via DAP pathway; DL-2,6-diaminopimelate from LL-2,6-diaminopimelate: step 1/1. In terms of biological role, catalyzes the stereoinversion of LL-2,6-diaminopimelate (L,L-DAP) to meso-diaminopimelate (meso-DAP), a precursor of L-lysine and an essential component of the bacterial peptidoglycan. The chain is Diaminopimelate epimerase from Zymomonas mobilis subsp. mobilis (strain ATCC 31821 / ZM4 / CP4).